Consider the following 280-residue polypeptide: Ribosomal RNA small subunit methyltransferase A (280 aa).

His-15, Leu-17, Gly-42, Glu-64, Asp-89, and Asn-109 together coordinate S-adenosyl-L-methionine.

The protein belongs to the class I-like SAM-binding methyltransferase superfamily. rRNA adenine N(6)-methyltransferase family. RsmA subfamily.

It localises to the cytoplasm. The catalysed reaction is adenosine(1518)/adenosine(1519) in 16S rRNA + 4 S-adenosyl-L-methionine = N(6)-dimethyladenosine(1518)/N(6)-dimethyladenosine(1519) in 16S rRNA + 4 S-adenosyl-L-homocysteine + 4 H(+). Its function is as follows. Specifically dimethylates two adjacent adenosines (A1518 and A1519) in the loop of a conserved hairpin near the 3'-end of 16S rRNA in the 30S particle. May play a critical role in biogenesis of 30S subunits. In Synechococcus sp. (strain WH7803), this protein is Ribosomal RNA small subunit methyltransferase A.